The primary structure comprises 1115 residues: Gamma tubulin complex adapter mto1 (1115 aa).

Positions 25 to 180 are disordered; it reads LTDEEVRRIL…NYISSSLDQL (156 aa). Basic and acidic residues-rich tracts occupy residues 28–41 and 56–71; these read EEVRRILSPRKEGS and EASHKYDFEIDRDSLK. Composition is skewed to polar residues over residues 72–102, 119–130, and 139–151; these read SDSGSPRLHQNATAPTSSTPLQSPDESVNKL, DTTNFDRLNDNI, and PVLTANQGFQSQE. At Ser-94 the chain carries Phosphoserine. Over residues 165-176 the composition is skewed to low complexity; sequence SDPSSPNYISSS. The stretch at 445–915 forms a coiled coil; the sequence is NEALLLRKQE…ERNSLIKNIV (471 aa). Residues 523–537 form a required for interaction with mto2 region; that stretch reads LMRMEQQWREDVDQL. Residues 1001-1011 are compositionally biased toward polar residues; sequence GSTSSIPNSPR. Disordered regions lie at residues 1001 to 1037 and 1067 to 1115; these read GSTSSIPNSPRASKRVSLDSEDKKLVPASPDKSAVQR and EQEG…QEHK. Ser-1005 and Ser-1009 each carry phosphoserine. Composition is skewed to basic and acidic residues over residues 1016–1025 and 1067–1084; these read VSLDSEDKKL and EQEGRKRDKLGARERLQD. A coiled-coil region spans residues 1072-1102; that stretch reads KRDKLGARERLQDLIRQNRSLSRQIKTDKES. 2 stretches are compositionally biased toward polar residues: residues 1086–1095 and 1104–1115; these read IRQNRSLSRQ and SRSPSISSQEHK.

As to quaternary structure, interacts with mto2; the interaction is direct and required for efficient binding to the gamma-tubulin complex. Interacts with gamma tubulin complex subunits alp4, alp6 and gtb1. Interacts with mcp6.

It is found in the cytoplasm. It localises to the cytoskeleton. Its subcellular location is the microtubule organizing center. The protein localises to the spindle pole body. Its function is as follows. Spindle pole body (SPB) component that acts as the gamma-tubulin complex-binding protein of the SPB outer plaque. Promotes nucleation of all cytoplasmic microtubules by recruiting the gamma-tubulin complex to the spindle pole body (SPB), to the interphase microtubule organizing center (iMTOC), and to the equatorial MTOC (eMTOC) during anaphase. The protein is Gamma tubulin complex adapter mto1 of Schizosaccharomyces pombe (strain 972 / ATCC 24843) (Fission yeast).